The sequence spans 263 residues: Glucosamine-6-phosphate deaminase (263 aa).

The active-site Proton acceptor; for enolization step is the Asp-67. The active-site For ring-opening step is the Asn-136. His-138 (proton acceptor; for ring-opening step) is an active-site residue. The active-site For ring-opening step is Glu-143.

It belongs to the glucosamine/galactosamine-6-phosphate isomerase family. NagB subfamily. As to quaternary structure, homohexamer.

It carries out the reaction alpha-D-glucosamine 6-phosphate + H2O = beta-D-fructose 6-phosphate + NH4(+). It functions in the pathway amino-sugar metabolism; N-acetylneuraminate degradation; D-fructose 6-phosphate from N-acetylneuraminate: step 5/5. Catalyzes the reversible isomerization-deamination of glucosamine 6-phosphate (GlcN6P) to form fructose 6-phosphate (Fru6P) and ammonium ion. This is Glucosamine-6-phosphate deaminase from Shewanella halifaxensis (strain HAW-EB4).